Reading from the N-terminus, the 474-residue chain is Trehalose-6-phosphate synthase (474 aa).

D-glucose 6-phosphate is bound at residue arginine 10. 22–23 lines the UDP-alpha-D-glucose pocket; sequence GG. Residues tyrosine 77 and aspartate 131 each coordinate D-glucose 6-phosphate. Residues arginine 263 and lysine 268 each contribute to the UDP-alpha-D-glucose site. Position 301 (arginine 301) interacts with D-glucose 6-phosphate. Residues phenylalanine 340 and 366-370 each bind UDP-alpha-D-glucose; that span reads LVAKE.

This sequence belongs to the glycosyltransferase 20 family. In terms of assembly, homotetramer.

The catalysed reaction is D-glucose 6-phosphate + UDP-alpha-D-glucose = alpha,alpha-trehalose 6-phosphate + UDP + H(+). Its pathway is glycan biosynthesis; trehalose biosynthesis. Functionally, probably involved in the osmoprotection via the biosynthesis of trehalose. Catalyzes the transfer of glucose from UDP-alpha-D-glucose (UDP-Glc) to D-glucose 6-phosphate (Glc-6-P) to form trehalose-6-phosphate. Acts with retention of the anomeric configuration of the UDP-sugar donor. The polypeptide is Trehalose-6-phosphate synthase (Escherichia coli O1:K1 / APEC).